Here is a 416-residue protein sequence, read N- to C-terminus: Homeobox even-skipped homolog protein 1 (416 aa).

Disordered stretches follow at residues 30 to 120 (AVSS…SDFY) and 138 to 178 (YQHS…LACS). Residues 72–82 (GLAGSAAGLGA) are compositionally biased toward low complexity. The span at 102–114 (DSLSGQGQPSSSD) shows a compositional bias: polar residues. Residues 183 to 242 (MRRYRTAFTREQIARLEKEFYRENYVSRPRRCELAAALNLPETTIKVWFQNRRMKDKRQR) constitute a DNA-binding region (homeobox).

This sequence belongs to the even-skipped homeobox family.

The protein localises to the nucleus. May play a role in the specification of neuronal cell types. May play a role in the dorsoventral specification of mesodermal cell fate. The sequence is that of Homeobox even-skipped homolog protein 1 (Evx1) from Mus musculus (Mouse).